The sequence spans 565 residues: Periplasmic trehalase (565 aa).

Residues 1-30 (MKSPAPSRPQKMALIPACIFLCFAALSVQA) form the signal peptide. Residues arginine 152, 159 to 160 (WD), asparagine 196, 205 to 207 (RSQ), 277 to 279 (RPE), and glycine 310 each bind substrate. Catalysis depends on proton donor/acceptor residues aspartate 312 and glutamate 496. Glutamate 511 is a substrate binding site. The tract at residues 538–565 (PCDNVPATRPTVKSATTQPSTKEAQPTP) is disordered. The span at 548-565 (TVKSATTQPSTKEAQPTP) shows a compositional bias: polar residues.

It belongs to the glycosyl hydrolase 37 family. Monomer.

It is found in the periplasm. It carries out the reaction alpha,alpha-trehalose + H2O = alpha-D-glucose + beta-D-glucose. Functionally, provides the cells with the ability to utilize trehalose at high osmolarity by splitting it into glucose molecules that can subsequently be taken up by the phosphotransferase-mediated uptake system. In Escherichia coli O139:H28 (strain E24377A / ETEC), this protein is Periplasmic trehalase.